We begin with the raw amino-acid sequence, 318 residues long: Cytochrome f (318 aa).

The N-terminal stretch at 1 to 34 (MQNRNFFEYPKNWIILLIPIFTTFNLLFTSDCYA) is a signal peptide. Phe35, Cys55, Cys58, and His59 together coordinate heme. A helical transmembrane segment spans residues 284–303 (LQGLLVFLFLVVLAQVFLVL).

Belongs to the cytochrome f family. The 4 large subunits of the cytochrome b6-f complex are cytochrome b6, subunit IV (17 kDa polypeptide, petD), cytochrome f and the Rieske protein, while the 4 small subunits are PetG, PetL, PetM and PetN. The complex functions as a dimer. Heme is required as a cofactor.

It is found in the plastid. The protein localises to the chloroplast thylakoid membrane. Its function is as follows. Component of the cytochrome b6-f complex, which mediates electron transfer between photosystem II (PSII) and photosystem I (PSI), cyclic electron flow around PSI, and state transitions. The chain is Cytochrome f from Chaetosphaeridium globosum (Charophycean green alga).